The primary structure comprises 346 residues: Fe(3+) ions import ATP-binding protein FbpC 2 (346 aa).

Residues 5-235 (LEVDGVDKSF…PVDVPTAEFI (231 aa)) enclose the ABC transporter domain. Position 37-44 (37-44 (GPSGCGKT)) interacts with ATP.

Belongs to the ABC transporter superfamily. Fe(3+) ion importer (TC 3.A.1.10) family. As to quaternary structure, the complex is composed of two ATP-binding proteins (FbpC), two transmembrane proteins (FbpB) and a solute-binding protein (FbpA).

The protein localises to the cell membrane. The catalysed reaction is Fe(3+)(out) + ATP + H2O = Fe(3+)(in) + ADP + phosphate + H(+). Its function is as follows. Part of the ABC transporter complex FbpABC involved in Fe(3+) ions import. Responsible for energy coupling to the transport system. The chain is Fe(3+) ions import ATP-binding protein FbpC 2 from Rhodococcus jostii (strain RHA1).